We begin with the raw amino-acid sequence, 795 residues long: Putative replication origin-binding protein (795 aa).

A Helicase ATP-binding domain is found at 121-289 (WLSNDKIKTL…DNFGKSIVVN (169 aa)). 134 to 141 (SPMGTGKT) contacts ATP.

Belongs to the mimivirus R1 family.

Probably involved in DNA replication. May bind the genome origin of replication (ori). This is Putative replication origin-binding protein from Acanthamoeba polyphaga (Amoeba).